The chain runs to 197 residues: Transcription factor FapR (197 aa).

Belongs to the FapR family.

Its function is as follows. Transcriptional factor involved in regulation of membrane lipid biosynthesis by repressing genes involved in fatty acid and phospholipid metabolism. The protein is Transcription factor FapR of Bacillus anthracis (strain A0248).